A 316-amino-acid polypeptide reads, in one-letter code: Peroxidase 31 (316 aa).

A signal peptide spans 1–19 (MASLKSLFLLFLFFFTAQS). 4 disulfide bridges follow: cysteine 30-cysteine 111, cysteine 63-cysteine 68, cysteine 117-cysteine 312, and cysteine 196-cysteine 222. Residue histidine 61 is the Proton acceptor of the active site. Ca(2+) is bound by residues aspartate 62, glycine 67, aspartate 69, and serine 71. Proline 159 contributes to the substrate binding site. Histidine 189 lines the heme b pocket. Serine 190 serves as a coordination point for Ca(2+). Asparagine 206 carries an N-linked (GlcNAc...) asparagine glycan. Residues aspartate 236, threonine 239, and aspartate 244 each contribute to the Ca(2+) site.

This sequence belongs to the peroxidase family. Classical plant (class III) peroxidase subfamily. The cofactor is heme b. Ca(2+) is required as a cofactor.

It localises to the secreted. It catalyses the reaction 2 a phenolic donor + H2O2 = 2 a phenolic radical donor + 2 H2O. In terms of biological role, removal of H(2)O(2), oxidation of toxic reductants, biosynthesis and degradation of lignin, suberization, auxin catabolism, response to environmental stresses such as wounding, pathogen attack and oxidative stress. These functions might be dependent on each isozyme/isoform in each plant tissue. This Arabidopsis thaliana (Mouse-ear cress) protein is Peroxidase 31 (PER31).